A 393-amino-acid chain; its full sequence is Envelope glycoprotein D (393 aa).

The signal sequence occupies residues 1-25; sequence MGGAAARLGAVILFVVIVGLHGVRG. Residues 25–57 are interaction with TNFRSF14; that stretch reads GKYALADASLKMADPNRFRGKDLPVLDQLTDPP. Over 26–338 the chain is Virion surface; the sequence is KYALADASLK…PYHPPATPNN (313 aa). Histidine 64 lines the Zn(2+) pocket. Intrachain disulfides connect cysteine 90-cysteine 213, cysteine 130-cysteine 226, and cysteine 142-cysteine 151. N-linked (GlcNAc...) asparagine; by host glycans are attached at residues asparagine 118 and asparagine 145. Aspartate 239 is a binding site for Zn(2+). The profusion stretch occupies residues 260–304; the sequence is LKIAGWHGPRAPYTSTLLPPELPETPNATQPELAPEDPEDSALLE. Positions 273–300 are disordered; sequence TSTLLPPELPETPNATQPELAPEDPEDS. A glycan (N-linked (GlcNAc...) asparagine; by host) is linked at asparagine 286. Residues 339–363 traverse the membrane as a helical segment; sequence MGLIAGAVGGSLLAALVICGIVYWM. The Intravirion portion of the chain corresponds to 364 to 393; that stretch reads RRRTRKAPKRIRLPHIREDDQPSSHQPLFY.

Belongs to the herpesviridae glycoprotein D family. In terms of assembly, homodimer. Interacts with host receptor TNFRSF14. Interacts with host receptor NECTIN1. Interacts (via profusion domain) with gB; this interaction occurs in the absence of gH/gL. Interacts (via profusion domain) with gH/gL heterodimer; this interaction occurs in the absence of gB. Associates with the gB-gH/gL-gD complex. Interacts (via C-terminus) with UL11 tegument protein. Interacts with host RSAD2.

It is found in the virion membrane. It localises to the host Golgi apparatus. In terms of biological role, envelope glycoprotein that binds to the host cell entry receptors NECTIN1, TNFRSF14/HVEM and 3-O-sulfated heparan sulfate, promoting the virus entry into host cells. May trigger fusion with host membrane, by recruiting the fusion machinery composed of gB and gH/gL. The sequence is that of Envelope glycoprotein D (gD) from Homo sapiens (Human).